We begin with the raw amino-acid sequence, 126 residues long: 5-hydroxyisourate hydrolase (126 aa).

Histidine 16, arginine 54, and tyrosine 123 together coordinate substrate.

It belongs to the transthyretin family. 5-hydroxyisourate hydrolase subfamily. In terms of assembly, homotetramer.

It carries out the reaction 5-hydroxyisourate + H2O = 5-hydroxy-2-oxo-4-ureido-2,5-dihydro-1H-imidazole-5-carboxylate + H(+). Its function is as follows. Catalyzes the hydrolysis of 5-hydroxyisourate (HIU) to 2-oxo-4-hydroxy-4-carboxy-5-ureidoimidazoline (OHCU). This is 5-hydroxyisourate hydrolase from Pseudomonas aeruginosa (strain ATCC 15692 / DSM 22644 / CIP 104116 / JCM 14847 / LMG 12228 / 1C / PRS 101 / PAO1).